The chain runs to 710 residues: Polyribonucleotide nucleotidyltransferase (710 aa).

The Mg(2+) site is built by D487 and D493. Residues 554-613 (PRIEVMNIPVDKIREVIGSGGKVIREIVEKTGAKINIEDDGTVKIASSSGKEIEAARKWI) form the KH domain. The S1 motif domain maps to 623-691 (GQIYEGTVVK…ERGKVRLSMK (69 aa)).

This sequence belongs to the polyribonucleotide nucleotidyltransferase family. It depends on Mg(2+) as a cofactor.

Its subcellular location is the cytoplasm. The enzyme catalyses RNA(n+1) + phosphate = RNA(n) + a ribonucleoside 5'-diphosphate. Functionally, involved in mRNA degradation. Catalyzes the phosphorolysis of single-stranded polyribonucleotides processively in the 3'- to 5'-direction. This Rhizobium rhizogenes (strain K84 / ATCC BAA-868) (Agrobacterium radiobacter) protein is Polyribonucleotide nucleotidyltransferase.